Consider the following 339-residue polypeptide: Anthranilate phosphoribosyltransferase (339 aa).

Residues G79, 82-83 (GD), S87, 89-92 (NIST), 107-115 (KHGNRSISS), and S119 each bind 5-phospho-alpha-D-ribose 1-diphosphate. G79 serves as a coordination point for anthranilate. Mg(2+) is bound at residue S91. Anthranilate is bound at residue N110. R165 is an anthranilate binding site. Mg(2+) is bound by residues D224 and E225.

Belongs to the anthranilate phosphoribosyltransferase family. In terms of assembly, homodimer. The cofactor is Mg(2+).

The enzyme catalyses N-(5-phospho-beta-D-ribosyl)anthranilate + diphosphate = 5-phospho-alpha-D-ribose 1-diphosphate + anthranilate. Its pathway is amino-acid biosynthesis; L-tryptophan biosynthesis; L-tryptophan from chorismate: step 2/5. Functionally, catalyzes the transfer of the phosphoribosyl group of 5-phosphorylribose-1-pyrophosphate (PRPP) to anthranilate to yield N-(5'-phosphoribosyl)-anthranilate (PRA). This Listeria welshimeri serovar 6b (strain ATCC 35897 / DSM 20650 / CCUG 15529 / CIP 8149 / NCTC 11857 / SLCC 5334 / V8) protein is Anthranilate phosphoribosyltransferase.